Here is a 980-residue protein sequence, read N- to C-terminus: Peroxisomal ATPase PEX6 (980 aa).

Arg-119 carries the omega-N-methylarginine modification. ATP is bound by residues 470 to 477 and 744 to 751; these read GPPGCGKT and GPPGTGKT.

It belongs to the AAA ATPase family. Interacts with PEX1; forming the PEX1-PEX6 AAA ATPase complex, which is composed of a heterohexamer formed by a trimer of PEX1-PEX6 dimers. Interacts with PEX26; interaction is direct and promotes recruitment to peroxisomal membranes. Interacts with ZFAND6. In terms of tissue distribution, expressed in the retina, at higher levels in the photoreceptor layer at the joint between the outer and inner segments.

The protein localises to the cytoplasm. The protein resides in the cytosol. It localises to the peroxisome membrane. Its subcellular location is the cell projection. It is found in the cilium. The protein localises to the photoreceptor outer segment. It carries out the reaction ATP + H2O = ADP + phosphate + H(+). Functionally, component of the PEX1-PEX6 AAA ATPase complex, a protein dislocase complex that mediates the ATP-dependent extraction of the PEX5 receptor from peroxisomal membranes, an essential step for PEX5 recycling. Specifically recognizes PEX5 monoubiquitinated at 'Cys-11', and pulls it out of the peroxisome lumen through the PEX2-PEX10-PEX12 retrotranslocation channel. Extraction by the PEX1-PEX6 AAA ATPase complex is accompanied by unfolding of the TPR repeats and release of bound cargo from PEX5. The polypeptide is Peroxisomal ATPase PEX6 (Homo sapiens (Human)).